The chain runs to 317 residues: Putative pyridoxal kinase BUD17 (317 aa).

Residues S16 and Y128 each coordinate substrate. Residues 190 to 191 and 220 to 232 each bind ATP; these read TS and EIPK…SGSG. Residue D233 coordinates substrate.

The protein belongs to the pyridoxine kinase family. Requires a divalent metal cation as cofactor.

The protein localises to the cytoplasm. Its subcellular location is the nucleus. It carries out the reaction pyridoxal + ATP = pyridoxal 5'-phosphate + ADP + H(+). Functionally, required for synthesis of pyridoxal-5-phosphate from vitamin B6. Important for bud site selection. This is Putative pyridoxal kinase BUD17 (BUD17) from Saccharomyces cerevisiae (strain ATCC 204508 / S288c) (Baker's yeast).